The chain runs to 145 residues: Large ribosomal subunit protein cL37 (145 aa).

The N-terminal 63 residues, 1–63 (MALLCFNSFT…PRKNSIFIAS (63 aa)), are a transit peptide targeting the chloroplast. A disordered region spans residues 125 to 145 (KRRLRKKGNWPPSKMKKLEGV).

This sequence belongs to the chloroplast-specific ribosomal protein cL37 family. As to quaternary structure, part of the 50S ribosomal subunit.

The protein localises to the plastid. It is found in the chloroplast. This is Large ribosomal subunit protein cL37 (PSRP5) from Pisum sativum (Garden pea).